The sequence spans 65 residues: Large ribosomal subunit protein bL33m (65 aa).

The N-terminal 8 residues, methionine 1–phenylalanine 8, are a transit peptide targeting the mitochondrion.

The protein belongs to the bacterial ribosomal protein bL33 family. As to quaternary structure, component of the mitochondrial ribosome large subunit (39S) which comprises a 16S rRNA and about 50 distinct proteins.

Its subcellular location is the mitochondrion. The chain is Large ribosomal subunit protein bL33m (MRPL33) from Bos taurus (Bovine).